A 301-amino-acid chain; its full sequence is Porphobilinogen deaminase (301 aa).

Cys235 is subject to S-(dipyrrolylmethanemethyl)cysteine.

This sequence belongs to the HMBS family. As to quaternary structure, monomer. It depends on dipyrromethane as a cofactor.

The enzyme catalyses 4 porphobilinogen + H2O = hydroxymethylbilane + 4 NH4(+). Its pathway is porphyrin-containing compound metabolism; protoporphyrin-IX biosynthesis; coproporphyrinogen-III from 5-aminolevulinate: step 2/4. Tetrapolymerization of the monopyrrole PBG into the hydroxymethylbilane pre-uroporphyrinogen in several discrete steps. In Thermus thermophilus (strain ATCC BAA-163 / DSM 7039 / HB27), this protein is Porphobilinogen deaminase.